A 387-amino-acid polypeptide reads, in one-letter code: SLC2A4 regulator (387 aa).

Disordered stretches follow at residues 1–97 and 139–179; these read MERP…RATP and EALV…PPEA. Low complexity predominate over residues 27–36; it reads GPGPRAAPVT. Residues 200–225 form a C2H2-type zinc finger; it reads FQCLWKSCGKVLSTASAMQRHIRLVH. Residues 253–263 carry the Nuclear export signal motif; it reads LTDGLSSLTPV. Phosphoserine occurs at positions 264 and 268. Residues 283–305 form a disordered region; it reads EPPALPSPLRPPAPPLPPPPVLS. The span at 285–303 shows a compositional bias: pro residues; it reads PALPSPLRPPAPPLPPPPV. The Nuclear localization signal motif lies at 351–354; that stretch reads RKPR.

Interacts with MEF2A. In terms of tissue distribution, according to PubMed:14630949, expressed in heart, skeletal muscle, liver, kidney and pancreas; undetectable in lung, placenta or brain. According to PubMed:14625278, ubiquitously expressed, with lowest expression in brain and ileum.

It localises to the cytoplasm. It is found in the nucleus. Transcription factor involved in SLC2A4 and HD gene transactivation. Binds to the consensus sequence 5'-GCCGGCG-3'. The polypeptide is SLC2A4 regulator (SLC2A4RG) (Homo sapiens (Human)).